Reading from the N-terminus, the 427-residue chain is Phosphoglucosamine mutase (427 aa).

S94 functions as the Phosphoserine intermediate in the catalytic mechanism. The Mg(2+) site is built by S94, D228, D230, and D232. The residue at position 94 (S94) is a Phosphoserine.

The protein belongs to the phosphohexose mutase family. Mg(2+) serves as cofactor. In terms of processing, activated by phosphorylation.

The enzyme catalyses alpha-D-glucosamine 1-phosphate = D-glucosamine 6-phosphate. Catalyzes the conversion of glucosamine-6-phosphate to glucosamine-1-phosphate. The sequence is that of Phosphoglucosamine mutase from Thermotoga sp. (strain RQ2).